Consider the following 958-residue polypeptide: Nuclear factor NF-kappa-B p100 subunit (958 aa).

In terms of domain architecture, RHD spans L40–G230. Positions R343 to K347 match the Nuclear localization signal motif. Disordered regions lie at residues P350–Q374 and C411–S442. Residues F352 to A390 are GRR. A compositionally biased stretch (gly residues) spans Y357 to Q374. The span at S412–I425 shows a compositional bias: polar residues. ANK repeat units lie at residues N500–N529, L539–I568, Y572–L603, H610–S639, S644–A674, and G678–S707. A disordered region spans residues V705 to Q766. Positions S724 to T734 are enriched in acidic residues. The span at E753–Q766 shows a compositional bias: basic and acidic residues. Residues V815 to E901 form the Death domain. Residues A904–S916 show a composition bias toward basic and acidic residues. The interval A904–Q958 is disordered. The segment covering A917–N931 has biased composition (polar residues).

Active NF-kappa-B is a heterodimer of an about 52 kDa DNA-binding subunit and the weak DNA-binding subunit p65. Two heterodimers might form a labile tetramer. In terms of processing, while translation occurs, the particular unfolded structure after the GRR repeat promotes the generation of p52 making it an acceptable substrate for the proteasome. This process is known as cotranslational processing. The processed form is active and the unprocessed form acts as an inhibitor (I kappa B-like), being able to form cytosolic complexes with NF-kappa B, trapping it in the cytoplasm. Complete folding of the region downstream of the GRR repeat precludes processing. Post-translationally, constitutive processing is tightly suppressed by its C-terminal processing inhibitory domain, named PID, which contains the death domain. As to expression, expressed in spleen.

The protein resides in the nucleus. Its subcellular location is the cytoplasm. Functionally, appears to have dual functions such as cytoplasmic retention of attached NF-kappa-B proteins and generation of p52 by a cotranslational processing. The proteasome-mediated process ensures the production of both p52 and p100 and preserves their independent function. p52 binds to the kappa-B consensus sequence 5'-GGRNNYYCC-3', located in the enhancer region of genes involved in immune response and acute phase reactions. In concert with RELB, may play a role in the regulation of the circadian clock. The protein is Nuclear factor NF-kappa-B p100 subunit (nfkb2) of Xenopus laevis (African clawed frog).